The chain runs to 257 residues: Pyrroline-5-carboxylate reductase (257 aa).

This sequence belongs to the pyrroline-5-carboxylate reductase family.

It localises to the cytoplasm. It catalyses the reaction L-proline + NADP(+) = (S)-1-pyrroline-5-carboxylate + NADPH + 2 H(+). It carries out the reaction L-proline + NAD(+) = (S)-1-pyrroline-5-carboxylate + NADH + 2 H(+). Its pathway is amino-acid biosynthesis; L-proline biosynthesis; L-proline from L-glutamate 5-semialdehyde: step 1/1. Catalyzes the reduction of 1-pyrroline-5-carboxylate (PCA) to L-proline. In Helicobacter pylori (strain J99 / ATCC 700824) (Campylobacter pylori J99), this protein is Pyrroline-5-carboxylate reductase.